The chain runs to 210 residues: Large ribosomal subunit protein uL3 (210 aa).

Residues 131 to 154 (GPMSHGSKYHRRVGSMGATTDPGR) are disordered.

This sequence belongs to the universal ribosomal protein uL3 family. As to quaternary structure, part of the 50S ribosomal subunit. Forms a cluster with proteins L14 and L19.

In terms of biological role, one of the primary rRNA binding proteins, it binds directly near the 3'-end of the 23S rRNA, where it nucleates assembly of the 50S subunit. The protein is Large ribosomal subunit protein uL3 of Thermoanaerobacter pseudethanolicus (strain ATCC 33223 / 39E) (Clostridium thermohydrosulfuricum).